The following is a 280-amino-acid chain: Ribosomal RNA-processing protein 7 homolog A (280 aa).

Residues 59–159 (RTLFVLNVPP…SGIHKWISDY (101 aa)) enclose the RRM domain. S99 carries the post-translational modification Phosphoserine.

This sequence belongs to the RRP7 family. As to quaternary structure, part of the small subunit (SSU) processome, composed of more than 70 proteins and the RNA chaperone small nucleolar RNA (snoRNA) U3. Interacts with NOL6; required for NOL6 localization to nucleolus. As to expression, expressed in the apical radial glial cells in the developing brain.

It localises to the nucleus. The protein resides in the nucleolus. Its subcellular location is the cell projection. It is found in the cilium. The protein localises to the cytoplasm. It localises to the cytoskeleton. The protein resides in the microtubule organizing center. Its subcellular location is the centrosome. Nucleolar protein that is involved in ribosomal RNA (rRNA) processing. Also plays a role in primary cilia resorption, and cell cycle progression in neurogenesis and neocortex development. Part of the small subunit (SSU) processome, first precursor of the small eukaryotic ribosomal subunit. During the assembly of the SSU processome in the nucleolus, many ribosome biogenesis factors, an RNA chaperone and ribosomal proteins associate with the nascent pre-rRNA and work in concert to generate RNA folding, modifications, rearrangements and cleavage as well as targeted degradation of pre-ribosomal RNA by the RNA exosome. The chain is Ribosomal RNA-processing protein 7 homolog A from Homo sapiens (Human).